The sequence spans 339 residues: TATA-box-binding protein (339 aa).

Disordered regions lie at residues 1–21 (MDQNNSLPPYAQGLASPQGAM), 36–71 (TGLTPQPIQNTNSLSILEEQQRQQQQQQQQQQQQQQ), and 127–159 (LTTAPLPGTTPLYPSPMTPMTPITPATPASESS). Residues 38–50 (LTPQPIQNTNSLS) show a composition bias toward polar residues. Low complexity-rich tracts occupy residues 57-71 (RQQQQQQQQQQQQQQ), 127-138 (LTTAPLPGTTPL), and 146-156 (MTPITPATPAS). A run of 2 repeats spans residues 165–241 (LQNI…ARVV) and 255–332 (IQNM…YPIL). 5 residues coordinate DNA: N167, R203, K218, N257, and R294.

The protein belongs to the TBP family. As to quaternary structure, binds DNA as monomer. Component of the TFIID basal transcription factor complex, composed of TATA-box-binding protein TBP, and a number of TBP-associated factors (TAFs), including TAF1, TAF2, TAF3, TAF4, TAF5, TAF6, TAF7, TAF8, TAF9, TAF10, TAF11, TAF12 and TAF13. Part of a TFIID-containing RNA polymerase II pre-initiation complex that is composed of TBP and at least GTF2A1, GTF2A2, GTF2E1, GTF2E2, GTF2F1, GTF2H2, GTF2H3, GTF2H4, GTF2H5, GTF2B, TCEA1, ERCC2, ERCC3, TAF1, TAF2, TAF3, TAF4, TAF5, TAF6, TAF7, TAF8, TAF9, TAF10, TAF11, TAF12 and TAF13. Component of the transcription factor SL1/TIF-IB complex, composed of TBP and at least TAF1A, TAF1B, TAF1C and TAF1D. Association of TBP to form either TFIID or SL1/TIF-IB appears to be mutually exclusive. Interacts with TAF1A, TAF1B and TAF1C. Interacts with TFIIB, NCOA6, DRAP1, DR1 and ELF3. Interacts with SPIB, SNAPC1, SNAPC2 and SNAPC4. Interacts with UTF1. Interacts with BRF2; this interaction promotes recruitment of BRF2 to TATA box-containing promoters. Interacts with UBTFD. Interacts with GPBP1D. Interacts with CITED2. Interacts with ATF7IP. Interacts with LLPH. Interacts with HSF1 (via transactivation domain). Interacts with GTF2B (via C-terminus); this interaction with promoter-bound TBP guides RNA polymerase II into the pre-initiation complex (PIC). Interacts with PAX5. Interacts with MSX1; the interaction may inhibit MSX1 autoinactivation. In terms of assembly, (Microbial infection) Interacts with HIV-1 Tat. (Microbial infection) Interacts with herpes simplex virus 1 ICP4. As to quaternary structure, (Microbial infection) Interacts with herpes simplex virus 2 ICP4. In terms of assembly, (Microbial infection) Interacts with human adenovirus E1A protein; this interaction probably disrupts the TBP-TATA complex. Widely expressed, with levels highest in the testis and ovary.

It is found in the nucleus. Its function is as follows. The TFIID basal transcription factor complex plays a major role in the initiation of RNA polymerase II (Pol II)-dependent transcription. TFIID recognizes and binds promoters with or without a TATA box via its subunit TBP, a TATA-box-binding protein, and promotes assembly of the pre-initiation complex (PIC). The TFIID complex consists of TBP and TBP-associated factors (TAFs), including TAF1, TAF2, TAF3, TAF4, TAF5, TAF6, TAF7, TAF8, TAF9, TAF10, TAF11, TAF12 and TAF13. The TFIID complex structure can be divided into 3 modules TFIID-A, TFIID-B, and TFIID-C. TBP forms the TFIID-A module together with TAF3 and TAF5. TBP is a general transcription factor that functions at the core of the TFIID complex. During assembly of the core PIC on the promoter, as part of TFIID, TBP binds to and also bends promoter DNA, irrespective of whether the promoter contains a TATA box. Component of a BRF2-containing transcription factor complex that regulates transcription mediated by RNA polymerase III. Component of the transcription factor SL1/TIF-IB complex, which is involved in the assembly of the PIC during RNA polymerase I-dependent transcription. The rate of PIC formation probably is primarily dependent on the rate of association of SL1 with the rDNA promoter. SL1 is involved in stabilization of nucleolar transcription factor 1/UBTF on rDNA. The chain is TATA-box-binding protein (TBP) from Homo sapiens (Human).